We begin with the raw amino-acid sequence, 601 residues long: Casbene synthase, chloroplastic (601 aa).

The N-terminal 56 residues, 1-56, are a transit peptide targeting the chloroplast; that stretch reads MALPSAAMQSNPEKLNLFHRLSSLPTTSLEYGNNRFPFFSSSAKSHFKKPTQACLS. 5 residues coordinate Mg(2+): D355, D359, N499, S503, and E507. The DDXXD motif motif lies at 355–359; sequence DDTID.

The protein belongs to the terpene synthase family. It depends on Mg(2+) as a cofactor.

Its subcellular location is the plastid. The protein localises to the chloroplast. It carries out the reaction (2E,6E,10E)-geranylgeranyl diphosphate = casbene + diphosphate. Its function is as follows. Catalyzes the cyclization of geranylgeranyl diphosphate to casbene, a diterpene phytoalexin with antibacterial and antifungal activity. This chain is Casbene synthase, chloroplastic, found in Ricinus communis (Castor bean).